A 53-amino-acid polypeptide reads, in one-letter code: uncharacterized protein (53 aa).

Residues 34 to 53 (RKEKGKRHAAPLSLMGVHKR) form a disordered region.

This is an uncharacterized protein from Treponema pallidum (strain Nichols).